The chain runs to 405 residues: Protein NDRG4 (405 aa).

The disordered stretch occupies residues 352 to 405; that stretch reads AGAVPSASMTRLARSRTASLTSASSVDGARPRPCTQSESSDGIGQINHTMEVSC. A compositionally biased stretch (low complexity) spans 361–376; sequence TRLARSRTASLTSASS. Polar residues predominate over residues 385–405; it reads CTQSESSDGIGQINHTMEVSC.

Belongs to the NDRG family.

It is found in the cytoplasm. It localises to the cytosol. Functionally, contributes to the maintenance of intracerebral BDNF levels within the normal range. May enhance growth factor-induced ERK1 and ERK2 phosphorylation. May attenuate growth factor-promoted ELK1 phosphorylation in a microtubule-dependent manner. This chain is Protein NDRG4, found in Xenopus tropicalis (Western clawed frog).